The primary structure comprises 97 residues: Small ribosomal subunit protein bS6 (97 aa).

Belongs to the bacterial ribosomal protein bS6 family.

Its function is as follows. Binds together with bS18 to 16S ribosomal RNA. This is Small ribosomal subunit protein bS6 from Bifidobacterium longum (strain NCC 2705).